A 331-amino-acid chain; its full sequence is Activator of 90 kDa heat shock protein ATPase homolog 2 (331 aa).

Belongs to the AHA1 family.

Co-chaperone that stimulates HSP90 ATPase activity. This Mus musculus (Mouse) protein is Activator of 90 kDa heat shock protein ATPase homolog 2 (Ahsa2).